The chain runs to 103 residues: Zinc-containing ferredoxin (103 aa).

Residues 1–36 (GIDPNYRTSKPVVGDHSGHKIYGPVESPKVLGVHGT) form an N-terminal extension region. H19 provides a ligand contact to Zn(2+). K29 carries the N6-methyllysine modification. Position 34 (H34) interacts with Zn(2+). 2 4Fe-4S ferredoxin-type domains span residues 35 to 65 (GTIVGVDFDLCIADGSCITACPVNVFQWYET) and 74 to 103 (KADPVNEQACIFCMACVNVCPVAAIDVKPP). C45 and C51 together coordinate [3Fe-4S] cluster. Residue C55 coordinates [4Fe-4S] cluster. D76 provides a ligand contact to Zn(2+). [4Fe-4S] cluster-binding residues include C83, C86, and C89. Position 93 (C93) interacts with [3Fe-4S] cluster.

Requires [3Fe-4S] cluster as cofactor. [4Fe-4S] cluster serves as cofactor. It depends on Zn(2+) as a cofactor.

Its function is as follows. Ferredoxins are iron-sulfur proteins that transfer electrons in a wide variety of metabolic reactions. The polypeptide is Zinc-containing ferredoxin (zfx) (Sulfolobus acidocaldarius (strain ATCC 33909 / DSM 639 / JCM 8929 / NBRC 15157 / NCIMB 11770)).